Consider the following 407-residue polypeptide: Argininosuccinate synthase (407 aa).

Residues 16-24 (AYSGGLDTS) and Ala44 contribute to the ATP site. L-citrulline-binding residues include Tyr96 and Ser101. Gly126 lines the ATP pocket. The L-aspartate site is built by Thr128, Asn132, and Asp133. Asn132 is a binding site for L-citrulline. L-citrulline is bound by residues Arg136, Ser185, Ser194, Glu270, and Tyr282.

The protein belongs to the argininosuccinate synthase family. Type 1 subfamily. In terms of assembly, homotetramer.

The protein resides in the cytoplasm. The catalysed reaction is L-citrulline + L-aspartate + ATP = 2-(N(omega)-L-arginino)succinate + AMP + diphosphate + H(+). The protein operates within amino-acid biosynthesis; L-arginine biosynthesis; L-arginine from L-ornithine and carbamoyl phosphate: step 2/3. The sequence is that of Argininosuccinate synthase from Shewanella amazonensis (strain ATCC BAA-1098 / SB2B).